Reading from the N-terminus, the 268-residue chain is 4-hydroxy-tetrahydrodipicolinate reductase (268 aa).

NAD(+) is bound by residues 9–14, Glu-35, 99–101, and 123–126; these read GVCGRM, GTT, and APNY. Residue His-156 is the Proton donor/acceptor of the active site. His-157 lines the (S)-2,3,4,5-tetrahydrodipicolinate pocket. The Proton donor role is filled by Lys-160. 166-167 is a (S)-2,3,4,5-tetrahydrodipicolinate binding site; it reads GT.

It belongs to the DapB family.

Its subcellular location is the cytoplasm. It catalyses the reaction (S)-2,3,4,5-tetrahydrodipicolinate + NAD(+) + H2O = (2S,4S)-4-hydroxy-2,3,4,5-tetrahydrodipicolinate + NADH + H(+). It carries out the reaction (S)-2,3,4,5-tetrahydrodipicolinate + NADP(+) + H2O = (2S,4S)-4-hydroxy-2,3,4,5-tetrahydrodipicolinate + NADPH + H(+). The protein operates within amino-acid biosynthesis; L-lysine biosynthesis via DAP pathway; (S)-tetrahydrodipicolinate from L-aspartate: step 4/4. Catalyzes the conversion of 4-hydroxy-tetrahydrodipicolinate (HTPA) to tetrahydrodipicolinate. The sequence is that of 4-hydroxy-tetrahydrodipicolinate reductase from Magnetococcus marinus (strain ATCC BAA-1437 / JCM 17883 / MC-1).